A 416-amino-acid chain; its full sequence is uncharacterized protein (416 aa).

9 helical membrane passes run 5 to 25, 84 to 104, 128 to 148, 160 to 180, 192 to 212, 237 to 257, 263 to 283, 288 to 308, and 312 to 332; these read LFLI…ILSL, ISGL…LKHV, AYVP…LFSI, LAFL…YLLW, VLLF…KFGF, PIYF…PVFL, FDKR…FYSL, LHHY…FYLT, and IKYA…GVYI.

It belongs to the glycosyltransferase 83 family.

Its subcellular location is the cell membrane. This is an uncharacterized protein from Aquifex aeolicus (strain VF5).